Reading from the N-terminus, the 601-residue chain is Kelch repeat and BTB domain-containing protein 8 (601 aa).

In terms of domain architecture, BTB spans 48–116; sequence TDIVVEVDHG…AYTSRVTLTE (69 aa). The region spanning 151–253 is the BACK domain; it reads CIGVFMFADA…LEEAFLSRIP (103 aa). Kelch repeat units lie at residues 336 to 390, 391 to 441, 443 to 481, 482 to 529, and 542 to 588; these read DIFI…HCCG, KLYA…EYKD, IYVLQGEYFFCFDPRKDYWGHLPSMNIPRTQGLAALHKN, CIYY…KVLL, and QVMV…FECV.

The protein belongs to the KBTBD8 family. As to quaternary structure, component of the BCR(KBTBD8) E3 ubiquitin ligase complex.

The protein localises to the cytoplasm. Its subcellular location is the cytoskeleton. It localises to the spindle. The protein resides in the golgi apparatus. Functionally, substrate-specific adapter of a BCR (BTB-CUL3-RBX1) E3 ubiquitin ligase complex that acts as a regulator of neural crest specification. The BCR(KBTBD8) complex acts by mediating monoubiquitination of target proteins. This chain is Kelch repeat and BTB domain-containing protein 8 (kbtbd8), found in Danio rerio (Zebrafish).